A 469-amino-acid chain; its full sequence is NADH-quinone oxidoreductase subunit N (469 aa).

Helical transmembrane passes span 9 to 29 (PLLM…LIAG), 40 to 60 (VGVM…VQMV), 76 to 96 (ATGV…AVAG), 105 to 125 (EAET…LAGA), 128 to 148 (LLLL…LVGL), 162 to 182 (YLMG…LYGL), 201 to 221 (VAVA…AGGV), 234 to 254 (ANAT…LVAL), 265 to 285 (LAWP…GNLA), 294 to 316 (RLLG…VAGA), 327 to 347 (YLGG…ALPG), 365 to 385 (AAAL…AVFI), 402 to 422 (LAVV…RWII), and 448 to 468 (VLAA…WQLV).

It belongs to the complex I subunit 2 family. In terms of assembly, NDH-1 is composed of 14 different subunits. Subunits NuoA, H, J, K, L, M, N constitute the membrane sector of the complex.

It localises to the cell membrane. It catalyses the reaction a quinone + NADH + 5 H(+)(in) = a quinol + NAD(+) + 4 H(+)(out). In terms of biological role, NDH-1 shuttles electrons from NADH, via FMN and iron-sulfur (Fe-S) centers, to quinones in the respiratory chain. The immediate electron acceptor for the enzyme in this species is believed to be a menaquinone. Couples the redox reaction to proton translocation (for every two electrons transferred, four hydrogen ions are translocated across the cytoplasmic membrane), and thus conserves the redox energy in a proton gradient. The sequence is that of NADH-quinone oxidoreductase subunit N from Mycobacterium sp. (strain JLS).